We begin with the raw amino-acid sequence, 280 residues long: Pantothenate synthetase (280 aa).

30 to 37 (MGALHEGH) is an ATP binding site. Histidine 37 functions as the Proton donor in the catalytic mechanism. Glutamine 61 is a binding site for (R)-pantoate. Position 61 (glutamine 61) interacts with beta-alanine. Residue 147–150 (GQKD) coordinates ATP. Glutamine 153 serves as a coordination point for (R)-pantoate. ATP contacts are provided by residues valine 176 and 184–187 (MSSR).

This sequence belongs to the pantothenate synthetase family. Homodimer.

It localises to the cytoplasm. It carries out the reaction (R)-pantoate + beta-alanine + ATP = (R)-pantothenate + AMP + diphosphate + H(+). The protein operates within cofactor biosynthesis; (R)-pantothenate biosynthesis; (R)-pantothenate from (R)-pantoate and beta-alanine: step 1/1. Functionally, catalyzes the condensation of pantoate with beta-alanine in an ATP-dependent reaction via a pantoyl-adenylate intermediate. This chain is Pantothenate synthetase, found in Thermodesulfovibrio yellowstonii (strain ATCC 51303 / DSM 11347 / YP87).